A 525-amino-acid chain; its full sequence is Ubiquitin carboxyl-terminal hydrolase 22 (525 aa).

A UBP-type zinc finger spans residues 21–138 (PGCSHLGSFK…KEEQRKAWKM (118 aa)). Cys23, His25, Cys63, Cys66, Cys76, Cys79, Cys84, His89, His93, His99, Cys112, and Cys115 together coordinate Zn(2+). Lys129 is subject to N6-acetyllysine. Thr147 bears the Phosphothreonine mark. In terms of domain architecture, USP spans 176–520 (RGLINLGNTC…EGYLLFYHKQ (345 aa)). Cys185 serves as the catalytic Nucleophile. Residue Ser237 is modified to Phosphoserine. His479 serves as the catalytic Proton acceptor.

Belongs to the peptidase C19 family. UBP8 subfamily. Component of some SAGA transcription coactivator-HAT complexes, at least composed of ATXN7, ATXN7L3, ENY2, GCN5L2, SUPT3H, TAF10, TRRAP and USP22. Within the SAGA complex, ATXN7L3, ENY2 and USP22 form a subcomplex required for histone deubiquitination. Interacts directly with ATXN7L3; leading to its recruitment to the SAGA complex. Interacts with ATXN7L3 and weakly with ATXN7L3B. Interacts with MED1. In terms of processing, phosphorylated in G2/M phase, but not in G1 phase by CDK1. Ubiquitinated and subsequently degraded in a CDC20-dependent manner. In terms of tissue distribution, highly expressed in brain and weakly in other organs.

The protein resides in the nucleus. Its subcellular location is the cytoplasm. It carries out the reaction Thiol-dependent hydrolysis of ester, thioester, amide, peptide and isopeptide bonds formed by the C-terminal Gly of ubiquitin (a 76-residue protein attached to proteins as an intracellular targeting signal).. Its function is as follows. Deubiquitinase that plays a role in several cellular processes including transcriptional regulation, cell cycle progression or innate immunity. As part of the transcription regulatory histone acetylation (HAT) complex SAGA, catalyzes the deubiquitination of both histones H2A and H2B, thereby acting as a transcriptional coactivator. Recruited to specific gene promoters by activators such as MYC, where it is required for transcription. Facilitates cell-cycle progression by stabilizing CCNB1 and antagonizing its proteasome-mediated degradation in a cell cycle-specific manner. Modulates cell cycle progression and apoptosis also by antagonizing TP53 transcriptional activation through deacetylase SIRT1 stabilization. Plays multiple roles in immunity and inflammation. Participates in antiviral response by deubiquitinating the importin KPNA2, leading to IRF3 nuclear translocation and subsequent type I interferon production. Acts as a central regulator of type III IFN signaling by negatively regulating STING1 activation and ubiquitination. Inhibits NLRP3 inflammasome activation by promoting NLRP3 degradation through ATG5-dependent autophagy. Deubiquitinates CD274 to induce its stabilization and thereby participates in maintenance of immune tolerance to self. Controls necroptotic cell death by regulating RIPK3 phosphorylation and ubiquitination. During bacterial infection, promotes pro-inflammatory response by targeting TRAF6 and removing its 'Lys-48'-linked polyubiquitination. In Mus musculus (Mouse), this protein is Ubiquitin carboxyl-terminal hydrolase 22 (Usp22).